Reading from the N-terminus, the 370-residue chain is Queuine tRNA-ribosyltransferase (370 aa).

Asp-93 (proton acceptor) is an active-site residue. Residues 93 to 97 (DSGGF), Asp-147, Gln-190, and Gly-217 contribute to the substrate site. Positions 248 to 254 (GVGTPDY) are RNA binding. Asp-267 functions as the Nucleophile in the catalytic mechanism. An RNA binding; important for wobble base 34 recognition region spans residues 272 to 276 (TRVAR). The Zn(2+) site is built by Cys-305, Cys-307, Cys-310, and His-336.

The protein belongs to the queuine tRNA-ribosyltransferase family. In terms of assembly, homodimer. Within each dimer, one monomer is responsible for RNA recognition and catalysis, while the other monomer binds to the replacement base PreQ1. It depends on Zn(2+) as a cofactor.

It catalyses the reaction 7-aminomethyl-7-carbaguanine + guanosine(34) in tRNA = 7-aminomethyl-7-carbaguanosine(34) in tRNA + guanine. It participates in tRNA modification; tRNA-queuosine biosynthesis. In terms of biological role, catalyzes the base-exchange of a guanine (G) residue with the queuine precursor 7-aminomethyl-7-deazaguanine (PreQ1) at position 34 (anticodon wobble position) in tRNAs with GU(N) anticodons (tRNA-Asp, -Asn, -His and -Tyr). Catalysis occurs through a double-displacement mechanism. The nucleophile active site attacks the C1' of nucleotide 34 to detach the guanine base from the RNA, forming a covalent enzyme-RNA intermediate. The proton acceptor active site deprotonates the incoming PreQ1, allowing a nucleophilic attack on the C1' of the ribose to form the product. After dissociation, two additional enzymatic reactions on the tRNA convert PreQ1 to queuine (Q), resulting in the hypermodified nucleoside queuosine (7-(((4,5-cis-dihydroxy-2-cyclopenten-1-yl)amino)methyl)-7-deazaguanosine). This Natranaerobius thermophilus (strain ATCC BAA-1301 / DSM 18059 / JW/NM-WN-LF) protein is Queuine tRNA-ribosyltransferase.